The following is a 488-amino-acid chain: Facilitated trehalose transporter Tret1-2 homolog (488 aa).

Residues 1–28 (MKILMRADTHVSYSVPAEGPKANFTFSQ) lie on the Cytoplasmic side of the membrane. A helical membrane pass occupies residues 29 to 49 (VLAALSVSLCSLVVGFVSAYT). The Extracellular portion of the chain corresponds to 50–72 (SPALVSMTDRTITSFEVTKDAGS). A helical membrane pass occupies residues 73–93 (WVGGIMPLAALAGGITGGPLI). The Cytoplasmic portion of the chain corresponds to 94–105 (EYLGRRTTILAT). The chain crosses the membrane as a helical span at residues 106–126 (AVPFIVSSLLIACAVNVIMIL). Topologically, residues 127 to 129 (CGR) are extracellular. A helical transmembrane segment spans residues 130–150 (FLTGFCVGIASLSLPVYLGET). Residues 151–160 (LQPEVRGTLG) lie on the Cytoplasmic side of the membrane. Residues 161–181 (LLPTALGNIGILVCYVAGSFM) form a helical membrane-spanning segment. The N-linked (GlcNAc...) asparagine glycan is linked to Asn182. Topologically, residues 182 to 184 (NWS) are extracellular. A helical membrane pass occupies residues 185 to 205 (MLAFLGAALPVPFLILMIIIP). At 206-268 (ETPRWFVNRG…ELFKRINLKP (63 aa)) the chain is on the cytoplasmic side. Residues 269-289 (LSISLGLMFFQQFSGINAVIF) traverse the membrane as a helical segment. Over 290 to 305 (YTVQIFKDAGSTIDSN) the chain is Extracellular. The helical transmembrane segment at 306 to 326 (LCTIIVGIVNFFATFMGILLI) threads the bilayer. The Cytoplasmic segment spans residues 327–332 (DRLGRK). The helical transmembrane segment at 333 to 353 (ILLYISDIAMILTLSILGGFF) threads the bilayer. The Extracellular segment spans residues 354 to 372 (YCKAHGPDVSHLGWLPLTC). A helical membrane pass occupies residues 373–393 (FVIYILGFSLGFGPIPWLMMG). The Cytoplasmic segment spans residues 394–402 (EILPAKIRG). Residues 403–423 (PAASVVTAFNWFCTFVVTKTF) form a helical membrane-spanning segment. At 424 to 433 (QDLTVAMGAH) the chain is on the extracellular side. A helical transmembrane segment spans residues 434–454 (GAFWLFGVVCIVGLFFVIICV). Over 455-488 (PETRGKSLEEIERKMMGRVPISAVVNIKPFSFNM) the chain is Cytoplasmic.

It belongs to the major facilitator superfamily. Sugar transporter (TC 2.A.1.1) family. Trehalose transporter subfamily.

The protein resides in the cell membrane. Its function is as follows. Fails to transport trehalose. In Drosophila simulans (Fruit fly), this protein is Facilitated trehalose transporter Tret1-2 homolog.